Reading from the N-terminus, the 236-residue chain is Lipoprotein B (236 aa).

The first 27 residues, Met-1 to Ser-27, serve as a signal peptide directing secretion. Residue Cys-28 is the site of N-palmitoyl cysteine attachment. Cys-28 carries the S-diacylglycerol cysteine lipid modification. 2 disordered regions span residues Glu-35–Val-112 and Ser-134–Phe-236. The segment covering Ser-43–Phe-60 has biased composition (polar residues). Basic and acidic residues predominate over residues Gln-61–Glu-74. Polar residues-rich tracts occupy residues Ser-75–Val-112 and Asn-143–Lys-157. A compositionally biased stretch (basic and acidic residues) spans Asn-158–Asp-175. The span at Val-193 to Ser-212 shows a compositional bias: polar residues. Over residues Glu-215–Glu-228 the composition is skewed to basic and acidic residues.

The protein belongs to the M.pulmonis LipAB lipoprotein family.

The protein resides in the cell membrane. This is Lipoprotein B (lipB) from Mycoplasmopsis pulmonis (strain UAB CTIP) (Mycoplasma pulmonis).